Here is a 354-residue protein sequence, read N- to C-terminus: Uroporphyrinogen decarboxylase (354 aa).

Substrate is bound by residues 27–31 (RQAGR), D77, Y154, T209, and H327.

Belongs to the uroporphyrinogen decarboxylase family. As to quaternary structure, homodimer.

The protein localises to the cytoplasm. The catalysed reaction is uroporphyrinogen III + 4 H(+) = coproporphyrinogen III + 4 CO2. Its pathway is porphyrin-containing compound metabolism; protoporphyrin-IX biosynthesis; coproporphyrinogen-III from 5-aminolevulinate: step 4/4. Its function is as follows. Catalyzes the decarboxylation of four acetate groups of uroporphyrinogen-III to yield coproporphyrinogen-III. In Escherichia coli (strain UTI89 / UPEC), this protein is Uroporphyrinogen decarboxylase.